A 193-amino-acid chain; its full sequence is Ion-translocating oxidoreductase complex subunit A (193 aa).

6 consecutive transmembrane segments (helical) span residues 5–25 (ILFFISNILIENFILVKFLGL), 47–67 (FVILTSSVLLWCVNFFILLPL), 72–92 (LRIIAYMLIVSVSVQFLEIVL), 102–122 (LLGIFLPLITTNCTVLAIPLF), 134–154 (IFYGLSASLGFALVMIIFSCI), and 167–187 (FQGAPIILITVSLISITFMGF).

The protein belongs to the NqrDE/RnfAE family. As to quaternary structure, the complex is composed of six subunits: RnfA, RnfB, RnfC, RnfD, RnfE and RnfG.

The protein localises to the cell inner membrane. Its function is as follows. Part of a membrane-bound complex that couples electron transfer with translocation of ions across the membrane. The protein is Ion-translocating oxidoreductase complex subunit A of Buchnera aphidicola subsp. Acyrthosiphon pisum (strain APS) (Acyrthosiphon pisum symbiotic bacterium).